A 261-amino-acid polypeptide reads, in one-letter code: Type III pantothenate kinase (261 aa).

7 to 14 (EQGNTNTM) lines the ATP pocket. Substrate is bound at residue 108-111 (GADR). D110 (proton acceptor) is an active-site residue. Position 130 (D130) interacts with K(+). T133 serves as a coordination point for ATP. Substrate is bound at residue T187.

This sequence belongs to the type III pantothenate kinase family. Homodimer. NH4(+) is required as a cofactor. Requires K(+) as cofactor.

The protein localises to the cytoplasm. It catalyses the reaction (R)-pantothenate + ATP = (R)-4'-phosphopantothenate + ADP + H(+). The protein operates within cofactor biosynthesis; coenzyme A biosynthesis; CoA from (R)-pantothenate: step 1/5. In terms of biological role, catalyzes the phosphorylation of pantothenate (Pan), the first step in CoA biosynthesis. The polypeptide is Type III pantothenate kinase (Caulobacter vibrioides (strain ATCC 19089 / CIP 103742 / CB 15) (Caulobacter crescentus)).